Here is a 420-residue protein sequence, read N- to C-terminus: Glycogen synthase kinase-3 beta (420 aa).

A compositionally biased stretch (polar residues) spans 1–22 (MSGRPRTTSFAESCKPVQQPSA). The tract at residues 1-53 (MSGRPRTTSFAESCKPVQQPSAFGSMKVSRDKDGSKVTTVVATPGQGPDRPQE) is disordered. Ser-9 carries the phosphoserine; by PKB/AKT1, RPS6KA3 and SGK3 modification. Residue Cys-14 is the site of S-palmitoyl cysteine attachment. Residues 56 to 340 (YTDTKVIGNG…PLEACAHSFF (285 aa)) enclose the Protein kinase domain. ATP is bound by residues 62–70 (IGNGSFGVV) and Lys-85. Residue Asp-181 is the Proton acceptor of the active site. Tyr-216 is subject to Phosphotyrosine. A compositionally biased stretch (low complexity) spans 386 to 401 (AAASTPTNATAASDAN). The interval 386 to 420 (AAASTPTNATAASDANTGDRGQTNNAASASASNST) is disordered. At Ser-389 the chain carries Phosphoserine. 2 positions are modified to phosphothreonine: Thr-390 and Thr-402. Residues 409-420 (NNAASASASNST) show a composition bias toward low complexity.

Belongs to the protein kinase superfamily. CMGC Ser/Thr protein kinase family. GSK-3 subfamily. In terms of assembly, monomer. Interacts with ARRB2, DISC1 and ZBED3. Interacts with CABYR, MMP2, MUC1, NIN and PRUNE1. Interacts with AXIN1; the interaction mediates hyperphosphorylation of CTNNB1 leading to its ubiquitination and destruction. Interacts with and phosphorylates SNAI1. Interacts with DNM1L (via a C-terminal domain). Found in a complex composed of MACF1, APC, AXIN1, CTNNB1 and GSK3B. Interacts with SGK3. Interacts with DAB2IP (via C2 domain); the interaction stimulates GSK3B kinase activation. Interacts (via C2 domain) with PPP2CA. Interacts with the CLOCK-BMAL1 heterodimer. Interacts with the BMAL1. Interacts with CTNND2. Interacts with NCYM. The complex composed, at least, of APC, CTNNB1 and GSK3B interacts with JPT1; the interaction requires the inactive form of GSK3B (phosphorylated at 'Ser-9'). Forms a complex composed of PRKAR2A or PRKAR2B, GSK3B and GSKIP through GSKIP interaction; facilitates PKA-induced phosphorylation and regulates GSK3B activity. Interacts with GSKIP. Interacts with GID8. Interacts with PIWIL2. Interacts with LMBR1L. Interacts with DDX3X. Interacts with BIRC2. Interacts with TNFRSF10B; TNFRSF10B stimulation inhibits GSK3B kinase activity. Interacts with RICTOR; the interaction results in phosphorylation of RICTOR at 'Thr-1695' by GSK3B which facilitates FBXW7-mediated ubiquitination and subsequent degradation of RICTOR. Found in a complex with SLC39A6, SLC39A10 and with GSK3B that controls NCAM1 phosphorylation. Interacts with PKP3 (via ARM repeats); the interaction may be involved in PKP3 protein degradation. In terms of processing, phosphorylated by AKT1 and ILK1. Upon insulin-mediated signaling, the activated PKB/AKT1 protein kinase phosphorylates and deactivates GSK3B, resulting in the dephosphorylation and activation of GYS1. Activated by phosphorylation at Tyr-216. Inactivated by phosphorylation at Ser-9. Phosphorylated in a circadian manner in the hippocampus. Post-translationally, mono-ADP-ribosylation by PARP10 negatively regulates kinase activity. Palmitoylated. Palmitoylation by ZDHHC4 prevents AKT1-mediated phosphorylation. In terms of tissue distribution, expressed in testis, thymus, prostate and ovary and weakly expressed in lung, brain and kidney. Colocalizes with EIF2AK2/PKR and TAU in the Alzheimer disease (AD) brain.

It is found in the cytoplasm. It localises to the nucleus. The protein localises to the cell membrane. It catalyses the reaction L-seryl-[tau protein] + ATP = O-phospho-L-seryl-[tau protein] + ADP + H(+). The enzyme catalyses L-threonyl-[tau protein] + ATP = O-phospho-L-threonyl-[tau protein] + ADP + H(+). It carries out the reaction L-seryl-[protein] + ATP = O-phospho-L-seryl-[protein] + ADP + H(+). The catalysed reaction is L-threonyl-[protein] + ATP = O-phospho-L-threonyl-[protein] + ADP + H(+). With respect to regulation, activated by phosphorylation at Tyr-216. In response to insulin, inhibited by phosphorylation at Ser-9 by PKB/AKT1 and RPS6KA3; phosphorylation at this site causes a conformational change, preventing access of substrates to the active site. Inhibited by IL22 treatment which also triggers phosphorylation at Ser-9, promoting inactivation. Inhibited by lithium. Its function is as follows. Constitutively active protein kinase that acts as a negative regulator in the hormonal control of glucose homeostasis, Wnt signaling and regulation of transcription factors and microtubules, by phosphorylating and inactivating glycogen synthase (GYS1 or GYS2), EIF2B, CTNNB1/beta-catenin, APC, AXIN1, DPYSL2/CRMP2, JUN, NFATC1/NFATC, MAPT/TAU and MACF1. Requires primed phosphorylation of the majority of its substrates. In skeletal muscle, contributes to insulin regulation of glycogen synthesis by phosphorylating and inhibiting GYS1 activity and hence glycogen synthesis. May also mediate the development of insulin resistance by regulating activation of transcription factors. Regulates protein synthesis by controlling the activity of initiation factor 2B (EIF2BE/EIF2B5) in the same manner as glycogen synthase. In Wnt signaling, GSK3B forms a multimeric complex with APC, AXIN1 and CTNNB1/beta-catenin and phosphorylates the N-terminus of CTNNB1 leading to its degradation mediated by ubiquitin/proteasomes. Phosphorylates JUN at sites proximal to its DNA-binding domain, thereby reducing its affinity for DNA. Phosphorylates NFATC1/NFATC on conserved serine residues promoting NFATC1/NFATC nuclear export, shutting off NFATC1/NFATC gene regulation, and thereby opposing the action of calcineurin. Phosphorylates MAPT/TAU on 'Thr-548', decreasing significantly MAPT/TAU ability to bind and stabilize microtubules. MAPT/TAU is the principal component of neurofibrillary tangles in Alzheimer disease. Plays an important role in ERBB2-dependent stabilization of microtubules at the cell cortex. Phosphorylates MACF1, inhibiting its binding to microtubules which is critical for its role in bulge stem cell migration and skin wound repair. Probably regulates NF-kappa-B (NFKB1) at the transcriptional level and is required for the NF-kappa-B-mediated anti-apoptotic response to TNF-alpha (TNF/TNFA). Negatively regulates replication in pancreatic beta-cells, resulting in apoptosis, loss of beta-cells and diabetes. Through phosphorylation of the anti-apoptotic protein MCL1, may control cell apoptosis in response to growth factors deprivation. Phosphorylates MUC1 in breast cancer cells, decreasing the interaction of MUC1 with CTNNB1/beta-catenin. Is necessary for the establishment of neuronal polarity and axon outgrowth. Phosphorylates MARK2, leading to inhibition of its activity. Phosphorylates SIK1 at 'Thr-182', leading to sustainment of its activity. Phosphorylates ZC3HAV1 which enhances its antiviral activity. Phosphorylates SNAI1, leading to its ubiquitination and proteasomal degradation. Phosphorylates SFPQ at 'Thr-687' upon T-cell activation. Phosphorylates NR1D1 st 'Ser-55' and 'Ser-59' and stabilizes it by protecting it from proteasomal degradation. Regulates the circadian clock via phosphorylation of the major clock components including BMAL1, CLOCK and PER2. Phosphorylates FBXL2 at 'Thr-404' and primes it for ubiquitination by the SCF(FBXO3) complex and proteasomal degradation. Phosphorylates CLOCK AT 'Ser-427' and targets it for proteasomal degradation. Phosphorylates BMAL1 at 'Ser-17' and 'Ser-21' and primes it for ubiquitination and proteasomal degradation. Phosphorylates OGT at 'Ser-3' or 'Ser-4' which positively regulates its activity. Phosphorylates MYCN in neuroblastoma cells which may promote its degradation. Regulates the circadian rhythmicity of hippocampal long-term potentiation and BMAL1 and PER2 expression. Acts as a regulator of autophagy by mediating phosphorylation of KAT5/TIP60 under starvation conditions, activating KAT5/TIP60 acetyltransferase activity and promoting acetylation of key autophagy regulators, such as ULK1 and RUBCNL/Pacer. Negatively regulates extrinsic apoptotic signaling pathway via death domain receptors. Promotes the formation of an anti-apoptotic complex, made of DDX3X, BRIC2 and GSK3B, at death receptors, including TNFRSF10B. The anti-apoptotic function is most effective with weak apoptotic signals and can be overcome by stronger stimulation. Phosphorylates E2F1, promoting the interaction between E2F1 and USP11, stabilizing E2F1 and promoting its activity. Phosphorylates mTORC2 complex component RICTOR at 'Ser-1235' in response to endoplasmic stress, inhibiting mTORC2. Phosphorylates mTORC2 complex component RICTOR at 'Thr-1695' which facilitates FBXW7-mediated ubiquitination and subsequent degradation of RICTOR. Phosphorylates FXR1, promoting FXR1 ubiquitination by the SCF(FBXO4) complex and FXR1 degradation by the proteasome. Phosphorylates interleukin-22 receptor subunit IL22RA1, preventing its proteasomal degradation. The chain is Glycogen synthase kinase-3 beta from Homo sapiens (Human).